We begin with the raw amino-acid sequence, 1176 residues long: DNA-directed RNA polymerase subunit beta (1176 aa).

The segment covering 13–30 (TDASLHQGRPQSSSNSSV) has biased composition (polar residues). Residues 13–35 (TDASLHQGRPQSSSNSSVPGAPN) are disordered.

It belongs to the RNA polymerase beta chain family. In terms of assembly, the RNAP catalytic core consists of 2 alpha, 1 beta, 1 beta' and 1 omega subunit. When a sigma factor is associated with the core the holoenzyme is formed, which can initiate transcription.

It carries out the reaction RNA(n) + a ribonucleoside 5'-triphosphate = RNA(n+1) + diphosphate. In terms of biological role, DNA-dependent RNA polymerase catalyzes the transcription of DNA into RNA using the four ribonucleoside triphosphates as substrates. The protein is DNA-directed RNA polymerase subunit beta of Mycobacterium marinum (strain ATCC BAA-535 / M).